The sequence spans 484 residues: MATASSKKNIGRISQVIGPVVDVLFEEKLPPLLTALETKNQDATVVLEVAQHLGENVVRTISMDTTDGLVRGQEVVDTGSEIRVPVGPETLGRIMNVVGRPVDERGPIGSKQTMPIHADAPPFTEQSTDTAILTTGIKVIDLLAPYSKGGKVGLFGGAGVGKTVLIQELINNIAKGHGGFSVFAGVGERTREGNDLYHEFLEAGVIASDKDGNAISEGSKVALVYGQMNEPPGARARVALSGLTMAEYFRDQEGQDVLFFVDNIFRFTQAGAEVSALLGRIPSAVGYQPTLATDMGQLQERITSTKKGSITSVQAIYVPADDLTDPAPAASFAHLDATTVLSRAISEMGIYPAVDPLDSSSRNLEPRIVGDEHYQTARDVQEILQRYKNLQDIIAILGMDELSEDDRKVVGRARRIQRFLSQPFHVAEVFTGMPGKFVQVEDTVRSFREIIDGKYDDLPENAFYMVGSIDEAVAKAEKMAAEAA.

The disordered stretch occupies residues 104-123 (ERGPIGSKQTMPIHADAPPF). 156–163 (GGAGVGKT) provides a ligand contact to ATP.

Belongs to the ATPase alpha/beta chains family. As to quaternary structure, F-type ATPases have 2 components, CF(1) - the catalytic core - and CF(0) - the membrane proton channel. CF(1) has five subunits: alpha(3), beta(3), gamma(1), delta(1), epsilon(1). CF(0) has three main subunits: a(1), b(2) and c(9-12). The alpha and beta chains form an alternating ring which encloses part of the gamma chain. CF(1) is attached to CF(0) by a central stalk formed by the gamma and epsilon chains, while a peripheral stalk is formed by the delta and b chains.

The protein resides in the cell inner membrane. The catalysed reaction is ATP + H2O + 4 H(+)(in) = ADP + phosphate + 5 H(+)(out). Its function is as follows. Produces ATP from ADP in the presence of a proton gradient across the membrane. The catalytic sites are hosted primarily by the beta subunits. In Zymomonas mobilis subsp. mobilis (strain ATCC 31821 / ZM4 / CP4), this protein is ATP synthase subunit beta.